The sequence spans 250 residues: 5-oxoprolinase subunit A (250 aa).

It belongs to the LamB/PxpA family. As to quaternary structure, forms a complex composed of PxpA, PxpB and PxpC.

The catalysed reaction is 5-oxo-L-proline + ATP + 2 H2O = L-glutamate + ADP + phosphate + H(+). Its function is as follows. Catalyzes the cleavage of 5-oxoproline to form L-glutamate coupled to the hydrolysis of ATP to ADP and inorganic phosphate. This chain is 5-oxoprolinase subunit A, found in Staphylococcus aureus (strain MRSA252).